We begin with the raw amino-acid sequence, 148 residues long: MRCPKCSSEESKVVDSRQAEDAIRRRRVCESCGFRFTTFERIEEMPLLVIKKDDKREPFNREKIVRGLVRSAYKRPVSSEDIETTVANVERKIRQLDSNEVESDVIGEFVMQELAELDDITYIRFASVYRSFKDVSELEELLKNITKK.

A zinc finger lies at 3-32 (CPKCSSEESKVVDSRQAEDAIRRRRVCESC). In terms of domain architecture, ATP-cone spans 47-137 (LLVIKKDDKR…VYRSFKDVSE (91 aa)).

The protein belongs to the NrdR family. It depends on Zn(2+) as a cofactor.

Functionally, negatively regulates transcription of bacterial ribonucleotide reductase nrd genes and operons by binding to NrdR-boxes. The chain is Transcriptional repressor NrdR from Lactococcus lactis subsp. lactis (strain IL1403) (Streptococcus lactis).